A 104-amino-acid polypeptide reads, in one-letter code: uncharacterized protein (104 aa).

Helical transmembrane passes span I26–F46 and G70–I90.

It is found in the membrane. This is an uncharacterized protein from Acanthamoeba polyphaga mimivirus (APMV).